The sequence spans 508 residues: Glycogen synthase (508 aa).

Lys-15 is a binding site for ADP-alpha-D-glucose. The interval 483-508 is disordered; it reads ARNRAETRPQTASALSYREPRPAAEY.

Belongs to the glycosyltransferase 1 family. Bacterial/plant glycogen synthase subfamily.

It catalyses the reaction [(1-&gt;4)-alpha-D-glucosyl](n) + ADP-alpha-D-glucose = [(1-&gt;4)-alpha-D-glucosyl](n+1) + ADP + H(+). It participates in glycan biosynthesis; glycogen biosynthesis. Synthesizes alpha-1,4-glucan chains using ADP-glucose. This Paracidovorax citrulli (strain AAC00-1) (Acidovorax citrulli) protein is Glycogen synthase.